The sequence spans 131 residues: Methylglyoxal synthase (131 aa).

Residues 1–131 (MKIALIAHDK…GDLDYRKLRK (131 aa)) enclose the MGS-like domain. Residues His8, Lys12, 34–37 (TGTT), and 54–55 (SG) contribute to the substrate site. Asp60 (proton donor/acceptor) is an active-site residue. His87 is a binding site for substrate.

Belongs to the methylglyoxal synthase family.

The catalysed reaction is dihydroxyacetone phosphate = methylglyoxal + phosphate. Its function is as follows. Catalyzes the formation of methylglyoxal from dihydroxyacetone phosphate. In Bacillus cereus (strain AH820), this protein is Methylglyoxal synthase.